The primary structure comprises 345 residues: Acetylserotonin O-methyltransferase (345 aa).

Residues Tyr-147, Trp-164, Asp-210, 235–237 (GDF), and Arg-252 each bind S-adenosyl-L-methionine. The active-site Proton donor/acceptor is His-255. Residues Asp-256, Asn-302, and Gln-306 each contribute to the substrate site.

The protein belongs to the class I-like SAM-binding methyltransferase superfamily. Cation-independent O-methyltransferase family. Homodimer. Expressed in the pineal gland (at protein level). In the retina, very low expression is found at the mRNA level, and not at the protein level.

It catalyses the reaction N-acetylserotonin + S-adenosyl-L-methionine = melatonin + S-adenosyl-L-homocysteine + H(+). The protein operates within aromatic compound metabolism; melatonin biosynthesis; melatonin from serotonin: step 1/2. In terms of biological role, catalyzes the transfer of a methyl group onto N-acetylserotonin, producing melatonin (N-acetyl-5-methoxytryptamine). Its function is as follows. Does not show Acetylserotonin O-methyltransferase activity. The sequence is that of Acetylserotonin O-methyltransferase (ASMT) from Homo sapiens (Human).